Consider the following 255-residue polypeptide: MNTARLNQGTPLLLNAVSKHYAENIVLNQLDLHIPAGQFVAVVGRSGGGKSTLLHLLAGLETPTAGDVLAGTTPLAEIQDDTRMMFQDARLLPWKSVIDNVGLGLKGQWRDAARRALAAAGLENRAGEWPAALSGGQKQRVALARALIHRPGLLLLDEPLGALDALTRLEMQDLIVSLWQQHGFTVLLVTHDVSEAVAMADRVLLIEEGKISLDLTVDIPRPRRLGSVRLAELEAEVLQRVMRRGHSEQLIRRHG.

One can recognise an ABC transporter domain in the interval 12–233 (LLLNAVSKHY…RLGSVRLAEL (222 aa)). 44-51 (GRSGGGKS) lines the ATP pocket.

This sequence belongs to the ABC transporter superfamily. Aliphatic sulfonates importer (TC 3.A.1.17.2) family. In terms of assembly, the complex is composed of two ATP-binding proteins (SsuB), two transmembrane proteins (SsuC) and a solute-binding protein (SsuA).

The protein resides in the cell inner membrane. The enzyme catalyses ATP + H2O + aliphatic sulfonate-[sulfonate-binding protein]Side 1 = ADP + phosphate + aliphatic sulfonateSide 2 + [sulfonate-binding protein]Side 1.. Part of the ABC transporter complex SsuABC involved in aliphatic sulfonates import. Responsible for energy coupling to the transport system. The polypeptide is Aliphatic sulfonates import ATP-binding protein SsuB (Shigella flexneri).